The primary structure comprises 215 residues: Cardiolipin synthase (CMP-forming) (215 aa).

5 helical membrane-spanning segments follow: residues 29–49 (IPNI…WLIL), 60–80 (GWAL…GKLA), 117–137 (LWLT…VGIL), 158–178 (LMYA…ASLA), and 179–199 (AVFG…AGVL).

The protein belongs to the CDP-alcohol phosphatidyltransferase class-I family. A divalent metal cation serves as cofactor.

The protein localises to the cell membrane. It carries out the reaction a CDP-1,2-diacyl-sn-glycerol + a 1,2-diacyl-sn-glycero-3-phospho-(1'-sn-glycerol) = a cardiolipin + CMP + H(+). Its function is as follows. Catalyzes the synthesis of cardiolipin (CL) (diphosphatidylglycerol) by specifically transferring a phosphatidyl group from CDP-diacylglycerol to phosphatidylglycerol (PG). This chain is Cardiolipin synthase (CMP-forming), found in Streptomyces coelicolor (strain ATCC BAA-471 / A3(2) / M145).